We begin with the raw amino-acid sequence, 459 residues long: Zinc finger protein 213 (459 aa).

The region spanning 45–126 is the SCAN box domain; it reads RQRFRQFCYG…VALVEDLQKQ (82 aa). Positions 128–188 are disordered; it reads VKAWRQDVPS…ALLKEGRPGE (61 aa). Residues 202 to 292 enclose the KRAB domain; that stretch reads VALGDIPFYF…ENRPRAALGP (91 aa). 5 consecutive C2H2-type zinc fingers follow at residues 317-339, 345-367, 373-395, 401-423, and 429-451; these read HSCG…QRTH, HKCP…QGVH, FSCS…QRIH, FGCS…RRVH, and FGCG…QSLH.

The protein belongs to the krueppel C2H2-type zinc-finger protein family. Widely expressed with highest levels in testis.

It localises to the nucleus. In terms of biological role, may be involved in transcriptional regulation. The polypeptide is Zinc finger protein 213 (ZNF213) (Homo sapiens (Human)).